The chain runs to 369 residues: Endophilin-A (369 aa).

Residues 18 to 248 form the BAR domain; that stretch reads TEKMGGAEGT…LQEKRSEAES (231 aa). A coiled-coil region spans residues 227–247; sequence QCADVLRGLQETLQEKRSEAE. Positions 275–294 are enriched in low complexity; it reads GTPSHISSSASPLPSPMRSP. Positions 275-296 are disordered; sequence GTPSHISSSASPLPSPMRSPAK. In terms of domain architecture, SH3 spans 305-364; it reads QQQPCCQALYDFDPENPGELGFKENDIITLLNRVDDNWYEGAVNGRTGYFPQSYVQVQVP.

It belongs to the endophilin family.

Its subcellular location is the cytoplasm. The protein resides in the membrane. Functionally, required presynaptically at the neuromuscular junction. Implicated in synaptic vesicle endocytosis. In Drosophila pseudoobscura pseudoobscura (Fruit fly), this protein is Endophilin-A.